Reading from the N-terminus, the 590-residue chain is Nuclear receptor subfamily 2 group C member 1 (590 aa).

The tract at residues M1–M166 is required for interaction with KAT2B. Positions F98 to C173 form a DNA-binding region, nuclear receptor. 2 NR C4-type zinc fingers span residues C101–C121 and C137–C156. S185 and S203 each carry phosphoserine. A Phosphothreonine modification is found at T208. T210 carries the phosphothreonine; by MAPK1 modification. K238 is covalently cross-linked (Glycyl lysine isopeptide (Lys-Gly) (interchain with G-Cter in SUMO); alternate). A Glycyl lysine isopeptide (Lys-Gly) (interchain with G-Cter in SUMO2); alternate cross-link involves residue K238. The NR LBD domain occupies E333–E577. A Phosphoserine; by PKC modification is found at S568. A required for interaction with NRIP1 region spans residues P571–L590. Residue K575 forms a Glycyl lysine isopeptide (Lys-Gly) (interchain with G-Cter in SUMO2) linkage.

This sequence belongs to the nuclear hormone receptor family. NR2 subfamily. Homodimer. Heterodimer; with NR2C2 which is required for chromatin remodeling and for binding to promoter regions such as globin DR1 repeats. Interacts with ESR1; the interaction prevents homodimerization of ESR1 and suppresses its transcriptional activity and cell growth. Interacts with NRIP1 (via its LXXLL motifs); the interaction provides corepressor activity. Interacts with HDAC3 (via the DNA-binding domain); the interaction recruits phosphorylated NR2C1 to PML bodies for sumoylation. Interacts with HDAC4 (via the DNA-binding domain). Interacts with PIAS1; the interaction is required for sumoylation of NR2C1. Interacts with UBE2I; the interaction is required for sumoylation of NR2C1. Interacts with KAT2B; the interaction acts as a corepressor of gene expression. Post-translationally, sumoylation requires both PIAS1 and UBE2I. Sumoylation appears to dissociate NR2C1 from the PML nuclear bodies. Enhances the interaction with NRIP1 but inhibits interaction with KAT2B. In proliferating cells, stimulation by all-trans retinoic acid, activation of MAPK1-mediated phosphorylation and recruitment to PML bodies with subsequent sumoylation, suppresses OCT4 expression. In terms of processing, phosphorylated on several serine and threonine residues. Phosphorylation on Thr-210, stimulated by all-trans retinoic acid (atRA) mediates PML location and sumoylation in proliferating cells which then modulates its association with effector molecules, KAT2B and NRIP1. Phosphorylation on Ser-568 by PKC is important for protein stability and function as activator of RARB.

Its subcellular location is the nucleus. It is found in the PML body. Its function is as follows. Orphan nuclear receptor. Binds the IR7 element in the promoter of its own gene in an autoregulatory negative feedback mechanism. Primarily repressor of a broad range of genes including ESR1 and RARB. Together with NR2C2, forms the core of the DRED (direct repeat erythroid-definitive) complex that represses embryonic and fetal globin transcription. Binds to hormone response elements (HREs) consisting of two 5'-AGGTCA-3' half site direct repeat consensus sequences. Also activator of OCT4 gene expression. Plays a fundamental role in early embryogenesis and regulates embryonic stem cell proliferation and differentiation. Mediator of retinoic acid-regulated preadipocyte proliferation. This is Nuclear receptor subfamily 2 group C member 1 (Nr2c1) from Rattus norvegicus (Rat).